Reading from the N-terminus, the 305-residue chain is Transcriptional activator protein PfeR (305 aa).

In terms of domain architecture, Response regulatory spans 79-192 (RLLLVEDDPR…ELDARTDALL (114 aa)). Asp128 is modified (4-aspartylphosphate). A DNA-binding region (ompR/PhoB-type) is located at residues 200 to 301 (LPLAQRRDTR…VRGQGYLLVE (102 aa)).

In terms of processing, phosphorylated by PfeS.

It localises to the cytoplasm. Functionally, member of the two-component regulatory system PfeR/PfeS. Activates expression of the ferric enterobactin receptor. The polypeptide is Transcriptional activator protein PfeR (pfeR) (Pseudomonas aeruginosa (strain ATCC 15692 / DSM 22644 / CIP 104116 / JCM 14847 / LMG 12228 / 1C / PRS 101 / PAO1)).